Consider the following 249-residue polypeptide: Octanoyltransferase (249 aa).

The BPL/LPL catalytic domain maps to 53-234; it reads PDTDDEIWVV…RLIAHLDGAT (182 aa). Residues 93–100, 165–167, and 178–180 each bind substrate; these read RGGQITYH, ALG, and GLS. The active-site Acyl-thioester intermediate is the Cys-196.

It belongs to the LipB family.

The protein resides in the cytoplasm. The enzyme catalyses octanoyl-[ACP] + L-lysyl-[protein] = N(6)-octanoyl-L-lysyl-[protein] + holo-[ACP] + H(+). The protein operates within protein modification; protein lipoylation via endogenous pathway; protein N(6)-(lipoyl)lysine from octanoyl-[acyl-carrier-protein]: step 1/2. Catalyzes the transfer of endogenously produced octanoic acid from octanoyl-acyl-carrier-protein onto the lipoyl domains of lipoate-dependent enzymes. Lipoyl-ACP can also act as a substrate although octanoyl-ACP is likely to be the physiological substrate. This Burkholderia mallei (strain NCTC 10247) protein is Octanoyltransferase.